The sequence spans 240 residues: NADH-quinone oxidoreductase subunit C (240 aa).

The segment at 1 to 82 is disordered; it reads MSEEEKPKPK…PVDENRDPEP (82 aa). A compositionally biased stretch (low complexity) spans 11–20; it reads LSPALAAKMA. A compositionally biased stretch (basic and acidic residues) spans 67-82; the sequence is DKPKAEPVDENRDPEP.

Belongs to the complex I 30 kDa subunit family. In terms of assembly, NDH-1 is composed of 14 different subunits. Subunits NuoB, C, D, E, F, and G constitute the peripheral sector of the complex.

It is found in the cell inner membrane. The catalysed reaction is a quinone + NADH + 5 H(+)(in) = a quinol + NAD(+) + 4 H(+)(out). Its function is as follows. NDH-1 shuttles electrons from NADH, via FMN and iron-sulfur (Fe-S) centers, to quinones in the respiratory chain. The immediate electron acceptor for the enzyme in this species is believed to be a menaquinone. Couples the redox reaction to proton translocation (for every two electrons transferred, four hydrogen ions are translocated across the cytoplasmic membrane), and thus conserves the redox energy in a proton gradient. This Chloroherpeton thalassium (strain ATCC 35110 / GB-78) protein is NADH-quinone oxidoreductase subunit C.